Reading from the N-terminus, the 155-residue chain is Ribosomal RNA large subunit methyltransferase H (155 aa).

S-adenosyl-L-methionine is bound by residues Leu-72, Gly-103, and 122–127; that span reads LGRMVW.

This sequence belongs to the RNA methyltransferase RlmH family. As to quaternary structure, homodimer.

It is found in the cytoplasm. It carries out the reaction pseudouridine(1915) in 23S rRNA + S-adenosyl-L-methionine = N(3)-methylpseudouridine(1915) in 23S rRNA + S-adenosyl-L-homocysteine + H(+). Its function is as follows. Specifically methylates the pseudouridine at position 1915 (m3Psi1915) in 23S rRNA. This chain is Ribosomal RNA large subunit methyltransferase H, found in Cereibacter sphaeroides (strain KD131 / KCTC 12085) (Rhodobacter sphaeroides).